A 1340-amino-acid chain; its full sequence is TSET complex member tstE (1340 aa).

Residues 56–67 (NQSQTSPNSNDG) are compositionally biased toward low complexity. Disordered regions lie at residues 56 to 75 (NQSQ…GSGG) and 110 to 131 (SGSG…GGGQ). WD repeat units follow at residues 208 to 246 (VNQI…VIGK), 250 to 294 (DPTE…LQTI), 345 to 384 (GHKK…SFLN), and 397 to 436 (IEHS…NPQE). A compositionally biased stretch (polar residues) spans 1216–1251 (KSHMSSTTTLRRSPSIENIRTTSTTFDSSKFNTDNQ). The disordered stretch occupies residues 1216 to 1340 (KSHMSSTTTL…TPTPTTTLSS (125 aa)). Residues 1252–1275 (ELFDDDSDDDSDSGADADVDSENE) are compositionally biased toward acidic residues. The span at 1286–1318 (ASLQHNDNSSLTNITVTDNDSNLDQDITSNTGS) shows a compositional bias: polar residues. Residues 1328 to 1340 (LSSTPTPTTTLSS) are compositionally biased toward low complexity.

In terms of assembly, component of the TSET complex, a heterohexamer composed of tstA, tstB, tstC, tstD, tstE and tstF, which may act in plasma membrane turnover. tstA, tstB, tstC and tstD are likely to be the core complex members with tstE and tstF acting as associated scaffold proteins.

The protein is TSET complex member tstE of Dictyostelium discoideum (Social amoeba).